The sequence spans 538 residues: Methyl-accepting chemotaxis protein NahY (538 aa).

Residues 1–9 lie on the Cytoplasmic side of the membrane; it reads MQQFTIRTR. A helical transmembrane segment spans residues 10–30; that stretch reads LLMLVGAMFIGFITIELMGFS. Over 31 to 187 the chain is Periplasmic; sequence ALQRGVASLN…AVVLYDSSRT (157 aa). Residues 188-208 form a helical membrane-spanning segment; it reads MLALLLLGILICGGVFATRLI. The 53-residue stretch at 209 to 261 folds into the HAMP domain; sequence RSIIHPLTTLKDAAARVALGDLSQSIQVSGRNEVTDVQQSVQAMQANLRNTLQ. Over 209–538 the chain is Cytoplasmic; it reads RSIIHPLTTL…LNNLVNRFSM (330 aa). One can recognise a Methyl-accepting transducer domain in the interval 266–502; it reads SAAQLAAAAE…EVDRNLVAIS (237 aa).

The protein belongs to the methyl-accepting chemotaxis (MCP) protein family.

Its subcellular location is the cell inner membrane. Its function is as follows. Chemotactic-signal transducers respond to changes in the concentration of attractants and repellents in the environment, transduce a signal from the outside to the inside of the cell, and facilitate sensory adaptation through the variation of the level of methylation. Chemoreceptor for naphthalene or a related compound. May facilitate biodegradation. The polypeptide is Methyl-accepting chemotaxis protein NahY (nahY) (Pseudomonas putida (Arthrobacter siderocapsulatus)).